The following is a 476-amino-acid chain: Aspartyl/glutamyl-tRNA(Asn/Gln) amidotransferase subunit B (476 aa).

The protein belongs to the GatB/GatE family. GatB subfamily. In terms of assembly, heterotrimer of A, B and C subunits.

The catalysed reaction is L-glutamyl-tRNA(Gln) + L-glutamine + ATP + H2O = L-glutaminyl-tRNA(Gln) + L-glutamate + ADP + phosphate + H(+). It catalyses the reaction L-aspartyl-tRNA(Asn) + L-glutamine + ATP + H2O = L-asparaginyl-tRNA(Asn) + L-glutamate + ADP + phosphate + 2 H(+). Its function is as follows. Allows the formation of correctly charged Asn-tRNA(Asn) or Gln-tRNA(Gln) through the transamidation of misacylated Asp-tRNA(Asn) or Glu-tRNA(Gln) in organisms which lack either or both of asparaginyl-tRNA or glutaminyl-tRNA synthetases. The reaction takes place in the presence of glutamine and ATP through an activated phospho-Asp-tRNA(Asn) or phospho-Glu-tRNA(Gln). The chain is Aspartyl/glutamyl-tRNA(Asn/Gln) amidotransferase subunit B from Vesicomyosocius okutanii subsp. Calyptogena okutanii (strain HA).